The primary structure comprises 528 residues: Biotin carboxylase 1, chloroplastic (528 aa).

Residues 1–51 (MEATLPVCKSVTSTPGLFMGKTSGIRSSQCSFMMGNKVNFPRQRAQTAHVH) constitute a chloroplast transit peptide. ATP-binding positions include K179, K221, 227 to 228 (GG), 263 to 266 (EKYV), and H271. Residues 183–380 (RETMKKAGVP…LIEEQIRVAM (198 aa)) enclose the ATP-grasp domain. K300 is a hydrogencarbonate binding site. Residues E338 and E351 each coordinate ATP. Mg(2+)-binding residues include E338, E351, and N353. Mn(2+) is bound by residues E338, E351, and N353. Residues R355, V358, and R401 each coordinate hydrogencarbonate. Residue R355 is part of the active site. R401 contacts biotin.

As to quaternary structure, acetyl-CoA carboxylase is a heterohexamer composed of biotin carboxyl carrier protein, biotin carboxylase and two subunits each of ACCase subunit alpha and ACCase plastid-coded subunit beta (accD). Requires Mg(2+) as cofactor. Mn(2+) is required as a cofactor.

The protein resides in the plastid. Its subcellular location is the chloroplast. The catalysed reaction is N(6)-biotinyl-L-lysyl-[protein] + hydrogencarbonate + ATP = N(6)-carboxybiotinyl-L-lysyl-[protein] + ADP + phosphate + H(+). It participates in lipid metabolism; malonyl-CoA biosynthesis; malonyl-CoA from acetyl-CoA: step 1/1. Functionally, this protein is a component of the acetyl coenzyme A carboxylase complex; first, biotin carboxylase catalyzes the carboxylation of the carrier protein and then the transcarboxylase transfers the carboxyl group to form malonyl-CoA. This is Biotin carboxylase 1, chloroplastic from Populus trichocarpa (Western balsam poplar).